The primary structure comprises 412 residues: Tryptophan 2,3-dioxygenase (412 aa).

Substrate is bound by residues 79-83 (FIVVH), Tyr146, and Arg150. Position 346 (His346) interacts with heme. Thr360 is a binding site for substrate.

Belongs to the tryptophan 2,3-dioxygenase family. In terms of assembly, homotetramer. Heme is required as a cofactor.

It carries out the reaction L-tryptophan + O2 = N-formyl-L-kynurenine. The protein operates within amino-acid degradation; L-tryptophan degradation via kynurenine pathway; L-kynurenine from L-tryptophan: step 1/2. In terms of biological role, heme-dependent dioxygenase that catalyzes the oxidative cleavage of the L-tryptophan (L-Trp) pyrrole ring and converts L-tryptophan to N-formyl-L-kynurenine. Catalyzes the oxidative cleavage of the indole moiety. The protein is Tryptophan 2,3-dioxygenase of Sorangium cellulosum (strain So ce56) (Polyangium cellulosum (strain So ce56)).